A 33-amino-acid chain; its full sequence is Photosystem II reaction center protein Psb30 (33 aa).

The chain crosses the membrane as a helical span at residues Leu5–Leu25.

It belongs to the Psb30/Ycf12 family. As to quaternary structure, PSII is composed of 1 copy each of membrane proteins PsbA, PsbB, PsbC, PsbD, PsbE, PsbF, PsbH, PsbI, PsbJ, PsbK, PsbL, PsbM, PsbT, PsbY, PsbZ, Psb30/Ycf12, peripheral proteins of the oxygen-evolving complex and a large number of cofactors. It forms dimeric complexes.

The protein localises to the plastid. The protein resides in the chloroplast thylakoid membrane. A core subunit of photosystem II (PSII), probably helps stabilize the reaction center. The sequence is that of Photosystem II reaction center protein Psb30 from Euglena mutabilis.